We begin with the raw amino-acid sequence, 491 residues long: DEAD-box ATP-dependent RNA helicase 36 (491 aa).

Acidic residues predominate over residues Met-1 to Gly-10. The interval Met-1–Ser-56 is disordered. Residues Thr-24–Ser-56 are compositionally biased toward polar residues. Positions Thr-58–Thr-86 match the Q motif motif. One can recognise a Helicase ATP-binding domain in the interval Val-89 to Tyr-262. Ala-102 to Thr-109 is a binding site for ATP. The DEAD box signature appears at Asp-210 to Asp-213. The region spanning Tyr-289–Glu-438 is the Helicase C-terminal domain. A disordered region spans residues Lys-471–Asn-491. A compositionally biased stretch (basic residues) spans Leu-479–Asn-491.

This sequence belongs to the DEAD box helicase family. DDX49/DBP8 subfamily.

The enzyme catalyses ATP + H2O = ADP + phosphate + H(+). This chain is DEAD-box ATP-dependent RNA helicase 36 (RH36), found in Arabidopsis thaliana (Mouse-ear cress).